The primary structure comprises 41 residues: Cytochrome b559 subunit beta (41 aa).

The chain crosses the membrane as a helical span at residues 16–32 (WLAVHALAIPTVFFLGS). Histidine 20 lines the heme pocket.

The protein belongs to the PsbE/PsbF family. In terms of assembly, heterodimer of an alpha subunit and a beta subunit. PSII is composed of 1 copy each of membrane proteins PsbA, PsbB, PsbC, PsbD, PsbE, PsbF, PsbH, PsbI, PsbJ, PsbK, PsbL, PsbM, PsbT, PsbY, PsbZ, Psb30/Ycf12, at least 3 peripheral proteins of the oxygen-evolving complex and a large number of cofactors. It forms dimeric complexes. It depends on heme b as a cofactor.

It is found in the plastid. The protein localises to the chloroplast thylakoid membrane. Its function is as follows. This b-type cytochrome is tightly associated with the reaction center of photosystem II (PSII). PSII is a light-driven water:plastoquinone oxidoreductase that uses light energy to abstract electrons from H(2)O, generating O(2) and a proton gradient subsequently used for ATP formation. It consists of a core antenna complex that captures photons, and an electron transfer chain that converts photonic excitation into a charge separation. This is Cytochrome b559 subunit beta from Euglena gracilis.